The chain runs to 704 residues: Ribosomal RNA large subunit methyltransferase K/L (704 aa).

Belongs to the methyltransferase superfamily. RlmKL family.

Its subcellular location is the cytoplasm. It catalyses the reaction guanosine(2445) in 23S rRNA + S-adenosyl-L-methionine = N(2)-methylguanosine(2445) in 23S rRNA + S-adenosyl-L-homocysteine + H(+). The enzyme catalyses guanosine(2069) in 23S rRNA + S-adenosyl-L-methionine = N(2)-methylguanosine(2069) in 23S rRNA + S-adenosyl-L-homocysteine + H(+). Specifically methylates the guanine in position 2445 (m2G2445) and the guanine in position 2069 (m7G2069) of 23S rRNA. This Alcanivorax borkumensis (strain ATCC 700651 / DSM 11573 / NCIMB 13689 / SK2) protein is Ribosomal RNA large subunit methyltransferase K/L.